The following is a 185-amino-acid chain: Ribosome-recycling factor (185 aa).

The protein belongs to the RRF family.

The protein resides in the cytoplasm. Functionally, responsible for the release of ribosomes from messenger RNA at the termination of protein biosynthesis. May increase the efficiency of translation by recycling ribosomes from one round of translation to another. The sequence is that of Ribosome-recycling factor from Pseudoalteromonas atlantica (strain T6c / ATCC BAA-1087).